The following is a 352-amino-acid chain: Protein O-mannose kinase (352 aa).

Residues 1–16 (MERKPSVCRKSGSWNC) lie on the Cytoplasmic side of the membrane. A helical; Signal-anchor for type II membrane protein transmembrane segment spans residues 17–37 (LLVLFLLLLFTVVSVNFLLYM). The Lumenal segment spans residues 38-352 (YIDQMYAPSR…MAVAETREML (315 aa)). The region spanning 82–352 (VRKLKLVGEG…MAVAETREML (271 aa)) is the Protein kinase domain.

It belongs to the protein kinase superfamily. Ser/Thr protein kinase family. STKL subfamily.

It is found in the endoplasmic reticulum membrane. It catalyses the reaction 3-O-[beta-D-GalNAc-(1-&gt;3)-beta-D-GlcNAc-(1-&gt;4)-alpha-D-Man]-L-Thr-[protein] + ATP = 3-O-[beta-D-GalNAc-(1-&gt;3)-beta-D-GlcNAc-(1-&gt;4)-(O-6-P-alpha-D-Man)]-Thr-[protein] + ADP + H(+). Protein O-mannose kinase that specifically mediates phosphorylation at the 6-position of an O-mannose of the trisaccharide (N-acetylgalactosamine (GalNAc)-beta-1,3-N-acetylglucosamine (GlcNAc)-beta-1,4-mannose) to generate phosphorylated O-mannosyl trisaccharide (N-acetylgalactosamine-beta-1,3-N-acetylglucosamine-beta-1,4-(phosphate-6-)mannose). Phosphorylated O-mannosyl trisaccharide is a carbohydrate structure present in alpha-dystroglycan (dag1), which is required for binding laminin G-like domain-containing extracellular proteins with high affinity. Only shows kinase activity when the GalNAc-beta-3-GlcNAc-beta-terminus is linked to the 4-position of O-mannose, suggesting that this disaccharide serves as the substrate recognition motif. The chain is Protein O-mannose kinase (pomk) from Xenopus laevis (African clawed frog).